A 162-amino-acid chain; its full sequence is Calcium vector protein (162 aa).

Ala-2 carries the N-acetylalanine modification. 4 EF-hand domains span residues 12 to 47, 49 to 84, 86 to 121, and 123 to 158; these read EEKDECMKIFDIFDRNAENIAPVSDTMDMLTKLGQT, TKRETEAIMKEARGPKGDKKNIGPEEWLTLCSKWVR, DDEEEILRAFKVFDANGDGVIDFDEFKFIMQKVGEE, and LTDAEVEEAMKEADEDGNGVIDIPEFMDLIKKSKNA. At Lys-96 the chain carries N6,N6,N6-trimethyllysine. Asp-99, Asn-101, Asp-103, and Glu-110 together coordinate Ca(2+). Position 117 is an N6,N6,N6-trimethyllysine (Lys-117). 4 residues coordinate Ca(2+): Asp-136, Asp-138, Asn-140, and Glu-147.

The protein localises to the cytoplasm. The exact function of this protein is not yet known. It interacts with CAVPT, a protein also of unknown function, in a calcium-dependent way. This protein binds two calcium ions. This Branchiostoma lanceolatum (Common lancelet) protein is Calcium vector protein.